A 508-amino-acid chain; its full sequence is Heat shock 70 kDa protein 14 (508 aa).

This sequence belongs to the heat shock protein 70 family. In terms of assembly, component of ribosome-associated complex (RAC).

The protein localises to the cytoplasm. Its subcellular location is the cytosol. Functionally, component of the ribosome-associated complex (RAC), a complex involved in folding or maintaining nascent polypeptides in a folding-competent state. The polypeptide is Heat shock 70 kDa protein 14 (hspa14) (Xenopus tropicalis (Western clawed frog)).